The sequence spans 409 residues: Multifunctional CCA protein (409 aa).

ATP-binding residues include G8 and R11. 2 residues coordinate CTP: G8 and R11. Mg(2+)-binding residues include D21 and D23. The ATP site is built by R91, R137, and R140. Positions 91, 137, and 140 each coordinate CTP. The region spanning T228 to Y329 is the HD domain.

This sequence belongs to the tRNA nucleotidyltransferase/poly(A) polymerase family. Bacterial CCA-adding enzyme type 1 subfamily. Monomer. Can also form homodimers and oligomers. Mg(2+) is required as a cofactor. The cofactor is Ni(2+).

It catalyses the reaction a tRNA precursor + 2 CTP + ATP = a tRNA with a 3' CCA end + 3 diphosphate. The enzyme catalyses a tRNA with a 3' CCA end + 2 CTP + ATP = a tRNA with a 3' CCACCA end + 3 diphosphate. Functionally, catalyzes the addition and repair of the essential 3'-terminal CCA sequence in tRNAs without using a nucleic acid template. Adds these three nucleotides in the order of C, C, and A to the tRNA nucleotide-73, using CTP and ATP as substrates and producing inorganic pyrophosphate. tRNA 3'-terminal CCA addition is required both for tRNA processing and repair. Also involved in tRNA surveillance by mediating tandem CCA addition to generate a CCACCA at the 3' terminus of unstable tRNAs. While stable tRNAs receive only 3'-terminal CCA, unstable tRNAs are marked with CCACCA and rapidly degraded. This is Multifunctional CCA protein from Pseudomonas savastanoi pv. phaseolicola (strain 1448A / Race 6) (Pseudomonas syringae pv. phaseolicola (strain 1448A / Race 6)).